Here is a 312-residue protein sequence, read N- to C-terminus: Ribosomal protein L11 methyltransferase (312 aa).

T162, G183, D205, and N248 together coordinate S-adenosyl-L-methionine.

It belongs to the methyltransferase superfamily. PrmA family.

The protein localises to the cytoplasm. It catalyses the reaction L-lysyl-[protein] + 3 S-adenosyl-L-methionine = N(6),N(6),N(6)-trimethyl-L-lysyl-[protein] + 3 S-adenosyl-L-homocysteine + 3 H(+). Functionally, methylates ribosomal protein L11. In Bacillus cytotoxicus (strain DSM 22905 / CIP 110041 / 391-98 / NVH 391-98), this protein is Ribosomal protein L11 methyltransferase.